The sequence spans 295 residues: 4-hydroxy-3-methylbut-2-enyl diphosphate reductase (295 aa).

Residue cysteine 12 coordinates [4Fe-4S] cluster. Residues histidine 43 and histidine 81 each coordinate (2E)-4-hydroxy-3-methylbut-2-enyl diphosphate. Dimethylallyl diphosphate-binding residues include histidine 43 and histidine 81. Residues histidine 43 and histidine 81 each contribute to the isopentenyl diphosphate site. Position 103 (cysteine 103) interacts with [4Fe-4S] cluster. (2E)-4-hydroxy-3-methylbut-2-enyl diphosphate is bound at residue histidine 131. Histidine 131 is a dimethylallyl diphosphate binding site. Residue histidine 131 participates in isopentenyl diphosphate binding. Residue glutamate 133 is the Proton donor of the active site. A (2E)-4-hydroxy-3-methylbut-2-enyl diphosphate-binding site is contributed by threonine 171. Cysteine 199 lines the [4Fe-4S] cluster pocket. Residues serine 227, asparagine 229, and serine 272 each contribute to the (2E)-4-hydroxy-3-methylbut-2-enyl diphosphate site. Residues serine 227, asparagine 229, and serine 272 each contribute to the dimethylallyl diphosphate site. 3 residues coordinate isopentenyl diphosphate: serine 227, asparagine 229, and serine 272.

This sequence belongs to the IspH family. [4Fe-4S] cluster serves as cofactor.

It catalyses the reaction isopentenyl diphosphate + 2 oxidized [2Fe-2S]-[ferredoxin] + H2O = (2E)-4-hydroxy-3-methylbut-2-enyl diphosphate + 2 reduced [2Fe-2S]-[ferredoxin] + 2 H(+). The enzyme catalyses dimethylallyl diphosphate + 2 oxidized [2Fe-2S]-[ferredoxin] + H2O = (2E)-4-hydroxy-3-methylbut-2-enyl diphosphate + 2 reduced [2Fe-2S]-[ferredoxin] + 2 H(+). The protein operates within isoprenoid biosynthesis; dimethylallyl diphosphate biosynthesis; dimethylallyl diphosphate from (2E)-4-hydroxy-3-methylbutenyl diphosphate: step 1/1. It functions in the pathway isoprenoid biosynthesis; isopentenyl diphosphate biosynthesis via DXP pathway; isopentenyl diphosphate from 1-deoxy-D-xylulose 5-phosphate: step 6/6. Catalyzes the conversion of 1-hydroxy-2-methyl-2-(E)-butenyl 4-diphosphate (HMBPP) into a mixture of isopentenyl diphosphate (IPP) and dimethylallyl diphosphate (DMAPP). Acts in the terminal step of the DOXP/MEP pathway for isoprenoid precursor biosynthesis. The protein is 4-hydroxy-3-methylbut-2-enyl diphosphate reductase of Symbiobacterium thermophilum (strain DSM 24528 / JCM 14929 / IAM 14863 / T).